The following is a 407-amino-acid chain: Carbamoyl phosphate synthase small chain (407 aa).

A CPSase region spans residues 1–205 (MTETTPKTAP…LQDGYGEQDA (205 aa)). Positions 60, 257, and 259 each coordinate L-glutamine. The region spanning 209-397 (HVVALDFGVK…INLIRERKGQ (189 aa)) is the Glutamine amidotransferase type-1 domain. Cys286 (nucleophile) is an active-site residue. L-glutamine-binding residues include Leu287, Gln290, Asn328, Gly330, and Phe331. Catalysis depends on residues His370 and Glu372.

It belongs to the CarA family. As to quaternary structure, composed of two chains; the small (or glutamine) chain promotes the hydrolysis of glutamine to ammonia, which is used by the large (or ammonia) chain to synthesize carbamoyl phosphate. Tetramer of heterodimers (alpha,beta)4.

It catalyses the reaction hydrogencarbonate + L-glutamine + 2 ATP + H2O = carbamoyl phosphate + L-glutamate + 2 ADP + phosphate + 2 H(+). The enzyme catalyses L-glutamine + H2O = L-glutamate + NH4(+). It participates in amino-acid biosynthesis; L-arginine biosynthesis; carbamoyl phosphate from bicarbonate: step 1/1. It functions in the pathway pyrimidine metabolism; UMP biosynthesis via de novo pathway; (S)-dihydroorotate from bicarbonate: step 1/3. In terms of biological role, small subunit of the glutamine-dependent carbamoyl phosphate synthetase (CPSase). CPSase catalyzes the formation of carbamoyl phosphate from the ammonia moiety of glutamine, carbonate, and phosphate donated by ATP, constituting the first step of 2 biosynthetic pathways, one leading to arginine and/or urea and the other to pyrimidine nucleotides. The small subunit (glutamine amidotransferase) binds and cleaves glutamine to supply the large subunit with the substrate ammonia. The chain is Carbamoyl phosphate synthase small chain from Brucella abortus (strain S19).